A 98-amino-acid chain; its full sequence is NADH-ubiquinone oxidoreductase chain 4L (98 aa).

Transmembrane regions (helical) follow at residues 1 to 21 (MTSI…GVLM), 28 to 48 (STLL…SLLI), and 59 to 79 (APLI…ALLV).

This sequence belongs to the complex I subunit 4L family. In terms of assembly, core subunit of respiratory chain NADH dehydrogenase (Complex I) which is composed of 45 different subunits.

The protein resides in the mitochondrion inner membrane. It carries out the reaction a ubiquinone + NADH + 5 H(+)(in) = a ubiquinol + NAD(+) + 4 H(+)(out). In terms of biological role, core subunit of the mitochondrial membrane respiratory chain NADH dehydrogenase (Complex I) which catalyzes electron transfer from NADH through the respiratory chain, using ubiquinone as an electron acceptor. Part of the enzyme membrane arm which is embedded in the lipid bilayer and involved in proton translocation. The chain is NADH-ubiquinone oxidoreductase chain 4L (MT-ND4L) from Phascolarctos cinereus (Koala).